The sequence spans 483 residues: MERRQSICPQGRLPFYSAVVRSTSDIQASVRFASRHNLRLVIKNTGHDSAGRSSAPHSFQIHTSLLQNISLHKNFIARGSTTGRGPAVTLGAGVMQWQAYVHGAKNGYTILGGECPTVGAIGGFLQGGGVSSIHSFTRGLAVDQVLEYQVVSAKGDLITANEDNNQDLFWALKGGGGGTFGVVTEATVRVFSDDPVTVTSTKIEAAAANVLFWKEGVHELLRLLQRFNNLHVAGQLVISAPTKDSLQAGLELHFANLTDETQAIQLLRSEARALETHGISASTSVRVQRKASSELRMKPDLYPPHYGILEASVLISAATFHANDGPALIASKLSGLTLKPNDILFTSNLGGRVSENTAIEIALHPAWREAAQLVTLVRVVEPSIEGKLSALNDLTARDVPILYSIDPAAKISYRNLGDPQEKEFQARYWGADNYARLAATKAAWDPSHLFMTSLGVGSEVWDAEGICRKRRGFRAKASSLIGM.

The 184-residue stretch at 10–193 (QGRLPFYSAV…TEATVRVFSD (184 aa)) folds into the FAD-binding PCMH-type domain.

This sequence belongs to the oxygen-dependent FAD-linked oxidoreductase family. FAD serves as cofactor.

It participates in alkaloid biosynthesis; ergot alkaloid biosynthesis. In terms of biological role, FAD-linked oxidoreductase; part of the gene cluster that mediates the biosynthesis of fungal ergot alkaloid. DmaW catalyzes the first step of ergot alkaloid biosynthesis by condensing dimethylallyl diphosphate (DMAP) and tryptophan to form 4-dimethylallyl-L-tryptophan. The second step is catalyzed by the methyltransferase easF that methylates 4-dimethylallyl-L-tryptophan in the presence of S-adenosyl-L-methionine, resulting in the formation of 4-dimethylallyl-L-abrine. The catalase easC and the FAD-dependent oxidoreductase easE then transform 4-dimethylallyl-L-abrine to chanoclavine-I which is further oxidized by easD in the presence of NAD(+), resulting in the formation of chanoclavine-I aldehyde. Agroclavine dehydrogenase easG then mediates the conversion of chanoclavine-I aldehyde to agroclavine via a non-enzymatic adduct reaction: the substrate is an iminium intermediate that is formed spontaneously from chanoclavine-I aldehyde in the presence of glutathione. The presence of easA is not required to complete this reaction. Further conversion of agroclavine to paspalic acid is a two-step process involving oxidation of agroclavine to elymoclavine and of elymoclavine to paspalic acid, the second step being performed by the elymoclavine oxidase cloA. Paspalic acid is then further converted to D-lysergic acid. Ergopeptines are assembled from D-lysergic acid and three different amino acids by the D-lysergyl-peptide-synthetases composed each of a monomudular and a trimodular nonribosomal peptide synthetase subunit. LpsB and lpsC encode the monomodular subunits responsible for D-lysergic acid activation and incorporation into the ergopeptine backbone. LpsA1 and A2 subunits encode the trimodular nonribosomal peptide synthetase assembling the tripeptide portion of ergopeptines. LpsA1 is responsible for formation of the major ergopeptine, ergotamine, and lpsA2 for alpha-ergocryptine, the minor ergopeptine of the total alkaloid mixture elaborated by C.purpurea. D-lysergyl-tripeptides are assembled by the nonribosomal peptide synthetases and released as N-(D-lysergyl-aminoacyl)-lactams. Cyclolization of the D-lysergyl-tripeptides is performed by the Fe(2+)/2-ketoglutarate-dependent dioxygenase easH which introduces a hydroxyl group into N-(D-lysergyl-aminoacyl)-lactam at alpha-C of the aminoacyl residue followed by spontaneous condensation with the terminal lactam carbonyl group. The protein is FAD-linked oxidoreductase easE of Claviceps purpurea (strain 20.1) (Ergot fungus).